A 329-amino-acid polypeptide reads, in one-letter code: Malate dehydrogenase (329 aa).

An NAD(+)-binding site is contributed by 12 to 18 (GAAGQIG). Substrate is bound by residues Arg-93 and Arg-99. Residues Asn-106, Gln-113, and 130-132 (VGN) contribute to the NAD(+) site. Positions 132 and 163 each coordinate substrate. Residue His-188 is the Proton acceptor of the active site.

It belongs to the LDH/MDH superfamily. MDH type 2 family.

It carries out the reaction (S)-malate + NAD(+) = oxaloacetate + NADH + H(+). In terms of biological role, catalyzes the reversible oxidation of malate to oxaloacetate. The chain is Malate dehydrogenase from Frankia casuarinae (strain DSM 45818 / CECT 9043 / HFP020203 / CcI3).